The primary structure comprises 256 residues: Undecaprenyl-diphosphatase (256 aa).

The next 7 helical transmembrane spans lie at 8–28, 41–61, 75–95, 96–116, 175–195, 208–228, and 236–256; these read VLGIVEGISEFLPISSTGHLI, FVKSFEISIQLGSILAVVVLY, IIAAFIPTGIIGFLLYKLIKG, FLIGNDLVVVVSLILGGIILI, AEFSFLLAIPTMFAATTYDLI, ILIIGFITSFITALIVVKWFL, and LKIFGFYRILIGLVYAAFFLF.

This sequence belongs to the UppP family.

Its subcellular location is the cell inner membrane. It carries out the reaction di-trans,octa-cis-undecaprenyl diphosphate + H2O = di-trans,octa-cis-undecaprenyl phosphate + phosphate + H(+). Catalyzes the dephosphorylation of undecaprenyl diphosphate (UPP). Confers resistance to bacitracin. The protein is Undecaprenyl-diphosphatase of Aquifex aeolicus (strain VF5).